The sequence spans 447 residues: Protein odr-4 homolog (447 aa).

The next 2 membrane-spanning stretches (helical) occupy residues 82–102 and 425–445; these read MLPG…ELAD and IGVI…FHYF.

It belongs to the ODR-4 family. As to expression, ubiquitously expressed.

The protein localises to the membrane. May play a role in the trafficking of a subset of G-protein coupled receptors. The polypeptide is Protein odr-4 homolog (Odr4) (Mus musculus (Mouse)).